An 876-amino-acid polypeptide reads, in one-letter code: AP-1 complex subunit gamma-1 (876 aa).

HEAT repeat units follow at residues 97-135, 136-173, 248-284, 308-345, 346-382, 384-417, 418-454, 506-545, and 560-599; these read DERQ…ICSA, EMAR…KVPD, FLHI…KTES, SLRV…FDDQ, AVQR…ENNV, QLTK…KFSP, EKLW…NASE, VTES…RFPS, and SLLL…ATFN. The GAE domain maps to 756–873; that stretch reads PAYAPIVAYE…LEEGQVSNFP (118 aa).

It belongs to the adaptor complexes large subunit family. Adaptor protein complex 1 (AP-1) is a heterotetramer composed of two large adaptins (gamma-type subunit and beta-type subunit), a medium adaptin (mu-type subunit) and a small adaptin (sigma-type subunit). Binds to EPSIN1. Interacts with DRP2A/ADL6 (via C-terminus).

It is found in the golgi apparatus. The protein resides in the cytoplasmic vesicle. It localises to the clathrin-coated vesicle membrane. Subunit of clathrin-associated adaptor protein complex 1 that plays a role in protein sorting at the trans-Golgi network and early endosomes (TGN/EE). The AP complexes mediate both the recruitment of clathrin to membranes and the recognition of sorting signals within the cytosolic tails of transmembrane cargo molecules. The chain is AP-1 complex subunit gamma-1 (GAMMA-ADR) from Arabidopsis thaliana (Mouse-ear cress).